A 282-amino-acid polypeptide reads, in one-letter code: Transcription factor HES-1 (282 aa).

Residues M1 to K44 are disordered. Positions S10–V21 are enriched in low complexity. Positions D26–R35 are enriched in basic and acidic residues. Positions H34 to L91 constitute a bHLH domain. Positions Y110 to L143 constitute an Orange domain. Disordered stretches follow at residues Q158–P204 and T256–N282. Composition is skewed to pro residues over residues Q164–P174 and F182–S202. Residues S264 to S275 show a composition bias toward low complexity. A WRPW motif motif is present at residues W277–W280.

Interacts with SIRT1. Transcription repression requires formation of a complex with a corepressor protein of the Groucho/TLE family. Interacts (via WPRW motif) with TLE1, and more weakly with TLE2. Interacts with HES6. Interacts with an FA complex, composed of FANCA, FANCF, FANCG and FANCL, but not of FANCC, nor FANCE. In terms of tissue distribution, expressed at high levels in undifferentiated neural precursor cells, but the level of expression decreases as neural differentiation proceeds.

The protein resides in the nucleus. Functionally, transcriptional repressor of genes that require a bHLH protein for their transcription. May act as a negative regulator of myogenesis by inhibiting the functions of MYOD1 and ASH1. Binds DNA on N-box motifs: 5'-CACNAG-3' with high affinity and on E-box motifs: 5'-CANNTG-3' with low affinity. May play a role in a functional FA core complex response to DNA cross-link damage, being required for the stability and nuclear localization of FA core complex proteins, as well as for FANCD2 monoubiquitination in response to DNA damage. The polypeptide is Transcription factor HES-1 (Hes1) (Mus musculus (Mouse)).